The following is a 218-amino-acid chain: Large ribosomal subunit protein eL13 (218 aa).

The disordered stretch occupies residues 196–218 (AKRAKEAAESEDAAKGDPKKAKK). Basic and acidic residues predominate over residues 199–218 (AKEAAESEDAAKGDPKKAKK).

This sequence belongs to the eukaryotic ribosomal protein eL13 family. Component of the 60S large ribosomal subunit (LSU).

Its subcellular location is the cytoplasm. Its function is as follows. Component of the ribosome, a large ribonucleoprotein complex responsible for the synthesis of proteins in the cell. The small ribosomal subunit (SSU) binds messenger RNAs (mRNAs) and translates the encoded message by selecting cognate aminoacyl-transfer RNA (tRNA) molecules. The large subunit (LSU) contains the ribosomal catalytic site termed the peptidyl transferase center (PTC), which catalyzes the formation of peptide bonds, thereby polymerizing the amino acids delivered by tRNAs into a polypeptide chain. The nascent polypeptides leave the ribosome through a tunnel in the LSU and interact with protein factors that function in enzymatic processing, targeting, and the membrane insertion of nascent chains at the exit of the ribosomal tunnel. As part of the LSU, it is probably required for its formation and the maturation of rRNAs. The sequence is that of Large ribosomal subunit protein eL13 (RpL13) from Drosophila melanogaster (Fruit fly).